Here is a 131-residue protein sequence, read N- to C-terminus: uncharacterized protein (131 aa).

Residues 16–71 are disordered; sequence MSEQERDEVLEDDDDDEDNKSSQQERDEFVEDDDNNSIQSSPSCAQPLLTQYHDDG. Residues 20-33 show a composition bias toward acidic residues; the sequence is ERDEVLEDDDDDED.

This is an uncharacterized protein from Dictyostelium discoideum (Social amoeba).